The following is a 681-amino-acid chain: Structure-specific endonuclease subunit SLX4 (681 aa).

2 disordered regions span residues 239 to 305 (EREK…QEQL) and 505 to 528 (EVTG…NENL). Residues 251-261 (SDSSPEPTQLL) show a composition bias toward polar residues. Positions 265–281 (IIEEEHEVDEEEEDNEN) are enriched in acidic residues. Composition is skewed to polar residues over residues 288 to 305 (QLAS…QEQL) and 518 to 528 (QVPSSPGNENL).

Belongs to the SLX4 family. In terms of assembly, forms a heterodimer with SLX1. In terms of processing, phosphorylated in response to DNA damage.

Its subcellular location is the nucleus. Regulatory subunit of the SLX1-SLX4 structure-specific endonuclease that resolves DNA secondary structures generated during DNA repair and recombination. Has endonuclease activity towards branched DNA substrates, introducing single-strand cuts in duplex DNA close to junctions with ss-DNA. The protein is Structure-specific endonuclease subunit SLX4 of Meyerozyma guilliermondii (strain ATCC 6260 / CBS 566 / DSM 6381 / JCM 1539 / NBRC 10279 / NRRL Y-324) (Yeast).